We begin with the raw amino-acid sequence, 474 residues long: Aspartyl/glutamyl-tRNA(Asn/Gln) amidotransferase subunit B (474 aa).

This sequence belongs to the GatB/GatE family. GatB subfamily. As to quaternary structure, heterotrimer of A, B and C subunits.

The enzyme catalyses L-glutamyl-tRNA(Gln) + L-glutamine + ATP + H2O = L-glutaminyl-tRNA(Gln) + L-glutamate + ADP + phosphate + H(+). The catalysed reaction is L-aspartyl-tRNA(Asn) + L-glutamine + ATP + H2O = L-asparaginyl-tRNA(Asn) + L-glutamate + ADP + phosphate + 2 H(+). Functionally, allows the formation of correctly charged Asn-tRNA(Asn) or Gln-tRNA(Gln) through the transamidation of misacylated Asp-tRNA(Asn) or Glu-tRNA(Gln) in organisms which lack either or both of asparaginyl-tRNA or glutaminyl-tRNA synthetases. The reaction takes place in the presence of glutamine and ATP through an activated phospho-Asp-tRNA(Asn) or phospho-Glu-tRNA(Gln). The protein is Aspartyl/glutamyl-tRNA(Asn/Gln) amidotransferase subunit B of Lactiplantibacillus plantarum (strain ATCC BAA-793 / NCIMB 8826 / WCFS1) (Lactobacillus plantarum).